A 208-amino-acid polypeptide reads, in one-letter code: Pyridoxine/pyridoxamine 5'-phosphate oxidase (208 aa).

Residues 53 to 58 (RTVLLK), 68 to 69 (YS), K75, and Q100 contribute to the FMN site. A substrate-binding site is contributed by K58. Substrate-binding residues include Y118, R122, and S126. Residues 135–136 (QS) and W180 each bind FMN. 186–188 (RLH) is a binding site for substrate. R190 serves as a coordination point for FMN.

The protein belongs to the pyridoxamine 5'-phosphate oxidase family. As to quaternary structure, homodimer. FMN serves as cofactor.

The enzyme catalyses pyridoxamine 5'-phosphate + O2 + H2O = pyridoxal 5'-phosphate + H2O2 + NH4(+). The catalysed reaction is pyridoxine 5'-phosphate + O2 = pyridoxal 5'-phosphate + H2O2. It participates in cofactor metabolism; pyridoxal 5'-phosphate salvage; pyridoxal 5'-phosphate from pyridoxamine 5'-phosphate: step 1/1. Its pathway is cofactor metabolism; pyridoxal 5'-phosphate salvage; pyridoxal 5'-phosphate from pyridoxine 5'-phosphate: step 1/1. In terms of biological role, catalyzes the oxidation of either pyridoxine 5'-phosphate (PNP) or pyridoxamine 5'-phosphate (PMP) into pyridoxal 5'-phosphate (PLP). The sequence is that of Pyridoxine/pyridoxamine 5'-phosphate oxidase from Xylella fastidiosa (strain 9a5c).